Consider the following 448-residue polypeptide: ATP-dependent protease ATPase subunit HslU (448 aa).

ATP-binding positions include Val21, 63–68 (GVGKTE), Asp261, Glu326, and Arg398.

The protein belongs to the ClpX chaperone family. HslU subfamily. In terms of assembly, a double ring-shaped homohexamer of HslV is capped on each side by a ring-shaped HslU homohexamer. The assembly of the HslU/HslV complex is dependent on binding of ATP.

The protein resides in the cytoplasm. Its function is as follows. ATPase subunit of a proteasome-like degradation complex; this subunit has chaperone activity. The binding of ATP and its subsequent hydrolysis by HslU are essential for unfolding of protein substrates subsequently hydrolyzed by HslV. HslU recognizes the N-terminal part of its protein substrates and unfolds these before they are guided to HslV for hydrolysis. This Persephonella marina (strain DSM 14350 / EX-H1) protein is ATP-dependent protease ATPase subunit HslU.